A 78-amino-acid polypeptide reads, in one-letter code: Serine--glyoxylate aminotransferase (78 aa).

Belongs to the class-V pyridoxal-phosphate-dependent aminotransferase family. Homodimer. It depends on pyridoxal 5'-phosphate as a cofactor. In terms of tissue distribution, expressed in leaves but not in root tissue or seedlings.

It localises to the peroxisome. It carries out the reaction glyoxylate + L-serine = 3-hydroxypyruvate + glycine. It catalyses the reaction glyoxylate + L-alanine = glycine + pyruvate. With respect to regulation, inhibited by aminooxyacetate. This is Serine--glyoxylate aminotransferase from Triticum aestivum (Wheat).